The sequence spans 458 residues: tRNA-2-methylthio-N(6)-dimethylallyladenosine synthase (458 aa).

In terms of domain architecture, MTTase N-terminal spans 15–134 (KKVFIKTYGC…LPELLQQAQQ (120 aa)). [4Fe-4S] cluster contacts are provided by cysteine 24, cysteine 60, cysteine 97, cysteine 175, cysteine 179, and cysteine 182. Residues 161–393 (QKRGVSAFLT…QALLLDQQHR (233 aa)) enclose the Radical SAM core domain. The region spanning 396–457 (RSKIGQTTDV…SNSFVGEKAN (62 aa)) is the TRAM domain.

This sequence belongs to the methylthiotransferase family. MiaB subfamily. As to quaternary structure, monomer. Requires [4Fe-4S] cluster as cofactor.

The protein resides in the cytoplasm. The enzyme catalyses N(6)-dimethylallyladenosine(37) in tRNA + (sulfur carrier)-SH + AH2 + 2 S-adenosyl-L-methionine = 2-methylsulfanyl-N(6)-dimethylallyladenosine(37) in tRNA + (sulfur carrier)-H + 5'-deoxyadenosine + L-methionine + A + S-adenosyl-L-homocysteine + 2 H(+). In terms of biological role, catalyzes the methylthiolation of N6-(dimethylallyl)adenosine (i(6)A), leading to the formation of 2-methylthio-N6-(dimethylallyl)adenosine (ms(2)i(6)A) at position 37 in tRNAs that read codons beginning with uridine. The protein is tRNA-2-methylthio-N(6)-dimethylallyladenosine synthase of Bartonella bacilliformis (strain ATCC 35685 / KC583 / Herrer 020/F12,63).